Consider the following 115-residue polypeptide: Parathyroid hormone (115 aa).

The signal sequence occupies residues M1–G25. A propeptide spanning residues K26–R31 is cleaved from the precursor. The tract at residues R51–G69 is important for receptor binding. The disordered stretch occupies residues A73–Q115. Over residues K84 to D105 the composition is skewed to basic and acidic residues.

This sequence belongs to the parathyroid hormone family. Interacts with PTH1R (via N-terminal extracellular domain).

The protein resides in the secreted. Functionally, parathyroid hormone elevates calcium level by dissolving the salts in bone and preventing their renal excretion. Acts by binding to its receptor, PTH1R, activating G protein-coupled receptor signaling. Stimulates [1-14C]-2-deoxy-D-glucose (2DG) transport and glycogen synthesis in osteoblastic cells. The chain is Parathyroid hormone from Homo sapiens (Human).